Consider the following 407-residue polypeptide: Protein COS9 (407 aa).

The next 3 helical transmembrane spans lie at 75–95 (TWLLLLLLMWLPGFLSQIKSI), 98–118 (IFPFKLCILVSCLVGIFLPNI), and 261–281 (IFNLWLFPAFILFLACIYVSW).

Belongs to the DUP/COS family.

Its subcellular location is the membrane. The polypeptide is Protein COS9 (COS9) (Saccharomyces cerevisiae (strain ATCC 204508 / S288c) (Baker's yeast)).